Reading from the N-terminus, the 410-residue chain is Elongation factor Tu, chloroplastic (410 aa).

One can recognise a tr-type G domain in the interval 10–214 (KPHINIGTIG…QVDKYIPTPQ (205 aa)). Residues 19-26 (GHVDHGKT) form a G1 region. 19–26 (GHVDHGKT) contacts GTP. Threonine 26 serves as a coordination point for Mg(2+). Residues 60–64 (GITIN) are G2. The interval 81–84 (DCPG) is G3. GTP-binding positions include 81-85 (DCPGH) and 136-139 (NKED). The tract at residues 136 to 139 (NKED) is G4. Positions 174-176 (SAL) are G5.

Belongs to the TRAFAC class translation factor GTPase superfamily. Classic translation factor GTPase family. EF-Tu/EF-1A subfamily.

The protein localises to the plastid. The protein resides in the chloroplast. It carries out the reaction GTP + H2O = GDP + phosphate + H(+). Functionally, GTP hydrolase that promotes the GTP-dependent binding of aminoacyl-tRNA to the A-site of ribosomes during protein biosynthesis. The sequence is that of Elongation factor Tu, chloroplastic (tufA) from Mesostigma viride (Green alga).